Consider the following 436-residue polypeptide: Trigger factor (436 aa).

Residues 163–248 enclose the PPIase FKBP-type domain; that stretch reads GDRVTLDFAG…VKEVAEGVLP (86 aa).

Belongs to the FKBP-type PPIase family. Tig subfamily.

It is found in the cytoplasm. It carries out the reaction [protein]-peptidylproline (omega=180) = [protein]-peptidylproline (omega=0). In terms of biological role, involved in protein export. Acts as a chaperone by maintaining the newly synthesized protein in an open conformation. Functions as a peptidyl-prolyl cis-trans isomerase. This Bordetella petrii (strain ATCC BAA-461 / DSM 12804 / CCUG 43448) protein is Trigger factor.